A 354-amino-acid chain; its full sequence is Hydrophobic dipeptide epimerase (354 aa).

Substrate contacts are provided by residues T134, K159, and 159-161 (KIK). D189 contacts Mg(2+). N191 is a substrate binding site. Mg(2+)-binding residues include E215 and D240. Residues K264, 292 to 295 (CMAE), and 318 to 320 (DLD) each bind substrate.

The protein belongs to the mandelate racemase/muconate lactonizing enzyme family. Requires Mg(2+) as cofactor.

Functionally, catalyzes the epimerization of L-Ile-L-Tyr to L-Ile-D-Tyr (in vitro). Catalyzes the epimerization of dipeptides, with a preference for substrates with a hydrophobic or basic amino acid in the first position, followed by an aromatic residue in the second position. Has epimerase activity with L-Ile-L-Tyr, L-Val-L-Tyr and L-Arg-L-Tyr (in vitro). This is Hydrophobic dipeptide epimerase from Enterococcus faecalis (strain ATCC 700802 / V583).